We begin with the raw amino-acid sequence, 367 residues long: Alanine racemase (367 aa).

The active-site Proton acceptor; specific for D-alanine is the lysine 40. Residue lysine 40 is modified to N6-(pyridoxal phosphate)lysine. Arginine 136 contributes to the substrate binding site. Tyrosine 263 serves as the catalytic Proton acceptor; specific for L-alanine. Residue methionine 310 participates in substrate binding.

Belongs to the alanine racemase family. Pyridoxal 5'-phosphate is required as a cofactor.

The catalysed reaction is L-alanine = D-alanine. It participates in amino-acid biosynthesis; D-alanine biosynthesis; D-alanine from L-alanine: step 1/1. Its function is as follows. Catalyzes the interconversion of L-alanine and D-alanine. May also act on other amino acids. In Lactococcus lactis subsp. cremoris (strain SK11), this protein is Alanine racemase (alr).